The sequence spans 219 residues: Ribose-5-phosphate isomerase A (219 aa).

Residues Thr28–Thr31, Asp81–Asp84, and Lys94–Gly97 each bind substrate. Glu103 acts as the Proton acceptor in catalysis. Lys121 is a binding site for substrate.

Belongs to the ribose 5-phosphate isomerase family. Homodimer.

It catalyses the reaction aldehydo-D-ribose 5-phosphate = D-ribulose 5-phosphate. Its pathway is carbohydrate degradation; pentose phosphate pathway; D-ribose 5-phosphate from D-ribulose 5-phosphate (non-oxidative stage): step 1/1. Catalyzes the reversible conversion of ribose-5-phosphate to ribulose 5-phosphate. This is Ribose-5-phosphate isomerase A from Photorhabdus laumondii subsp. laumondii (strain DSM 15139 / CIP 105565 / TT01) (Photorhabdus luminescens subsp. laumondii).